The primary structure comprises 195 residues: Thymidine kinase (195 aa).

ATP contacts are provided by residues 15 to 22 (GSMFSGKS) and 88 to 91 (DEVQ). Glu89 (proton acceptor) is an active-site residue. Residue Phe120 coordinates substrate. Zn(2+) is bound by residues Cys145 and Cys148. Residues 170–174 (IILVG) and Tyr179 each bind substrate. The Zn(2+) site is built by Cys183 and Cys186.

It belongs to the thymidine kinase family. Homotetramer.

It localises to the cytoplasm. The catalysed reaction is thymidine + ATP = dTMP + ADP + H(+). The sequence is that of Thymidine kinase from Bacillus cereus (strain ATCC 14579 / DSM 31 / CCUG 7414 / JCM 2152 / NBRC 15305 / NCIMB 9373 / NCTC 2599 / NRRL B-3711).